Reading from the N-terminus, the 308-residue chain is B3 domain-containing protein REM23 (308 aa).

Positions 19-114 form a DNA-binding region, TF-B3 1; the sequence is FFKVLKRSDM…SFTVKIFNKD (96 aa). The interval 117-198 is disordered; it reads EMMQPPQSRA…TERTQNSKRT (82 aa). Residues 121–133 show a composition bias toward polar residues; that stretch reads PPQSRASFASSSR. Positions 134-145 are enriched in basic and acidic residues; that stretch reads VKTEQDVKREEE. Over residues 149-166 the composition is skewed to polar residues; sequence SSDSRSRGPTTAAETNRG. The span at 168–177 shows a compositional bias: basic residues; sequence SYKRKLNFGK. A compositionally biased stretch (basic and acidic residues) spans 178–198; the sequence is KKAEETQTYKRTERTQNSKRT. The segment at residues 216–308 is a DNA-binding region (TF-B3 2); it reads VAGFKIFISK…LELLLVVSKP (93 aa).

Its subcellular location is the nucleus. This chain is B3 domain-containing protein REM23 (REM23), found in Arabidopsis thaliana (Mouse-ear cress).